A 135-amino-acid polypeptide reads, in one-letter code: Phosphoribosyl-AMP cyclohydrolase (135 aa).

Asp-89 contacts Mg(2+). Cys-90 provides a ligand contact to Zn(2+). Mg(2+)-binding residues include Asp-91 and Asp-93. Zn(2+) is bound by residues Cys-106 and Cys-113.

It belongs to the PRA-CH family. In terms of assembly, homodimer. It depends on Mg(2+) as a cofactor. Requires Zn(2+) as cofactor.

Its subcellular location is the cytoplasm. It catalyses the reaction 1-(5-phospho-beta-D-ribosyl)-5'-AMP + H2O = 1-(5-phospho-beta-D-ribosyl)-5-[(5-phospho-beta-D-ribosylamino)methylideneamino]imidazole-4-carboxamide. It functions in the pathway amino-acid biosynthesis; L-histidine biosynthesis; L-histidine from 5-phospho-alpha-D-ribose 1-diphosphate: step 3/9. In terms of biological role, catalyzes the hydrolysis of the adenine ring of phosphoribosyl-AMP. This chain is Phosphoribosyl-AMP cyclohydrolase, found in Bifidobacterium adolescentis (strain ATCC 15703 / DSM 20083 / NCTC 11814 / E194a).